The sequence spans 146 residues: Inner membrane protein YdgK (146 aa).

Residues 1-12 (MTTTTPQRIGGW) are Cytoplasmic-facing. Residues 13–33 (LLGPLAWLLVALLSTTLALLL) form a helical membrane-spanning segment. At 34–59 (YTAALSSPQTFQTLGGQALTTQILWG) the chain is on the periplasmic side. Residues 60-80 (VSFITAIALWYYTLWLTIAFF) traverse the membrane as a helical segment. Residues 81–89 (KRRRCVPKH) are Cytoplasmic-facing. Residues 90 to 110 (YIIWLLISVLLAVKAFAFSPV) form a helical membrane-spanning segment. Residues 111–112 (ED) are Periplasmic-facing. The chain crosses the membrane as a helical span at residues 113–133 (GIAVRQLLFTLLATALIVPYF). Residues 134–146 (KRSSRVKATFVNP) are Cytoplasmic-facing.

To Synechocystis PCC 6803 sll0481.

The protein localises to the cell inner membrane. This chain is Inner membrane protein YdgK (ydgK), found in Escherichia coli (strain K12).